Consider the following 153-residue polypeptide: Ribosome maturation factor RimP (153 aa).

It belongs to the RimP family.

Its subcellular location is the cytoplasm. Required for maturation of 30S ribosomal subunits. In Acidithiobacillus ferrooxidans (strain ATCC 53993 / BNL-5-31) (Leptospirillum ferrooxidans (ATCC 53993)), this protein is Ribosome maturation factor RimP.